The following is a 422-amino-acid chain: Serine protease HTRA2, mitochondrial (422 aa).

The transit peptide at 1–17 (MALRGSHRLEVIFKRCI) directs the protein to the mitochondrion. Residues 18–74 (ASPVFHSHAANRRSSQLAIKGTDPSSNGNSGQDQQNGEQKAKGWRRLVRFFVPFSLG) constitute a propeptide that is removed on maturation. Over residues 29–55 (RRSSQLAIKGTDPSSNGNSGQDQQNGE) the composition is skewed to polar residues. The disordered stretch occupies residues 29–56 (RRSSQLAIKGTDPSSNGNSGQDQQNGEQ). Residues 64–82 (LVRFFVPFSLGAAVSAAVI) form a helical membrane-spanning segment. 2 short sequence motifs (IAP-binding) span residues 75 to 78 (AAVS) and 94 to 97 (SKMT). The interval 139 to 302 (SNGSGFIIEQ…IPIDYVKVFL (164 aa)) is serine protease. Residues His-157, Asp-189, and Ser-266 each act as charge relay system in the active site. One can recognise a PDZ domain in the interval 325-410 (MGITMLTLTP…NLDIVILRGV (86 aa)).

The protein belongs to the peptidase S1C family. In terms of assembly, interacts with th/DIAP1 (via BIR 2 domain).

It localises to the mitochondrion intermembrane space. It is found in the mitochondrion membrane. The enzyme catalyses Cleavage of non-polar aliphatic amino-acids at the P1 position, with a preference for Val, Ile and Met. At the P2 and P3 positions, Arg is selected most strongly with a secondary preference for other hydrophilic residues.. Functionally, serine protease that shows proteolytic activity against a non-specific substrate beta-casein. Promotes or induces cell death either by direct binding to and inhibition of BIRC proteins (also called inhibitor of apoptosis proteins, IAPs), leading to an increase in caspase activity, or by a BIRC inhibition-independent, caspase-independent and serine protease activity-dependent mechanism. Can antagonize antiapoptotic activity of th/Diap1 by directly inducing the degradation of th/Diap1. In Drosophila yakuba (Fruit fly), this protein is Serine protease HTRA2, mitochondrial.